The sequence spans 2726 residues: Filamin-C (2726 aa).

The interval 1–260 is actin-binding; the sequence is MMNNSNYSDA…VMTYLSQFPK (260 aa). At Ser-5 the chain carries Phosphoserine. Calponin-homology (CH) domains lie at 37-143 and 160-263; these read KIQQ…LHYS and QTPK…KAKL. Filamin repeat units follow at residues 271 to 369, 371 to 469, 470 to 566, 567 to 659, 663 to 759, 760 to 862, 863 to 961, 962 to 1057, 1058 to 1150, 1151 to 1245, 1246 to 1345, 1346 to 1438, 1439 to 1534, 1535 to 1631, and 1636 to 1735; these read SKQL…EVNV, MALG…PVHV, AEAC…EVQV, SPEA…IAHI, PPDC…RVNV, GEGS…HIKV, DPSH…VVNV, APPL…AVEG, VLPP…KATI, QPVF…RVHV, QPAV…RVGV, TEGC…RVPV, KDVV…KIKV, LPAH…RIHA, and DASK…HVLA. An Omega-N-methylarginine modification is found at Arg-1003. A phosphoserine mark is found at Ser-1162 and Ser-1339. The tract at residues 1736–1759 is hinge 1; it reads CDPLPHVEEPAEVLQLHQPYAPLR. 4 Filamin repeats span residues 1760–1854, 1855–1947, 1948–2034, and 2037–2129; these read PGTC…LQFY, VDAI…TAKI, TGDD…KILV, and SEIG…TVKV. At Ser-2043 the chain carries Phosphoserine. The segment at 2163 to 2244 is intradomain insert; mediate targeting to Z lines; the sequence is GNWFQMVSAQ…FGSITRQQEG (82 aa). A compositionally biased stretch (basic and acidic residues) spans 2194–2210; sequence ISKTRGGETKREVRVEE. Positions 2194–2214 are disordered; the sequence is ISKTRGGETKREVRVEESTQV. Ser-2234 and Ser-2237 each carry phosphoserine. Thr-2239 carries the phosphothreonine modification. The segment covering 2241–2260 has biased composition (polar residues); the sequence is QQEGEASSQDMTAQVTSPSG. Residues 2241-2261 form a disordered region; it reads QQEGEASSQDMTAQVTSPSGK. The Filamin 20; mediates interaction with XIRP1 repeat unit spans residues 2245–2307; the sequence is EASSQDMTAQ…VPGSPFQFTV (63 aa). Filamin repeat units follow at residues 2310-2402, 2404-2497, and 2501-2593; these read LGEG…VVPV, SLSD…KIRV, and SQAG…KAKV. The interval 2404–2725 is interaction with INPPL1; the sequence is SLSDDARRLT…VPGSPFKVNV (322 aa). Phosphoserine occurs at positions 2587, 2618, 2621, 2633, 2715, and 2719. The tract at residues 2594–2630 is hinge 2; sequence TGPRLSGGHSLHETSTVLVETVTKSSSSRGASYSSIP. The segment at 2594-2726 is self-association site, tail; the sequence is TGPRLSGGHS…PGSPFKVNVP (133 aa). A Filamin 24 repeat occupies 2631–2725; it reads KFSSDASKVV…VPGSPFKVNV (95 aa).

This sequence belongs to the filamin family. In terms of assembly, homodimer; the filamin repeat 24 and the second hinge domain are important for dimer formation. Interacts with FLNB, KCND2, INPPL1, ITGB1A, MYOT, MYOZ1 and MYOZ3. Interacts with sarcoglycans SGCD and SGCG. Interacts (via filament repeats 17-18, 20-21 and 24) with USP25 (isoform USP25m only). Interacts with FBLIM1. Interacts with KY. Interacts with IGFN1. Interacts with MICALL2. Interacts with XIRP1; this interaction is mediated by filamin 20 repeat. Interacts with ANK3. Interacts with SYNPO2. Post-translationally, ubiquitinated by FBXL22, leading to proteasomal degradation.

Its subcellular location is the cytoplasm. It is found in the membrane. The protein resides in the cytoskeleton. It localises to the myofibril. The protein localises to the sarcomere. Its subcellular location is the z line. Its function is as follows. Muscle-specific filamin, which plays a central role in sarcomere assembly and organization. Critical for normal myogenesis, it probably functions as a large actin-cross-linking protein with structural functions at the Z lines in muscle cells. May be involved in reorganizing the actin cytoskeleton in response to signaling events. The protein is Filamin-C (Flnc) of Rattus norvegicus (Rat).